Consider the following 426-residue polypeptide: Probable indole-3-pyruvate monooxygenase YUCCA8 (426 aa).

29–34 provides a ligand contact to FAD; it reads GAGPSG. 199 to 204 contacts NADP(+); it reads GCGNSG.

This sequence belongs to the FMO family. FAD is required as a cofactor. As to expression, expressed in root tips and in hydathodes. Expressed in root vasculature and quiescent center, but not in the meristematic zone of the root tip.

It carries out the reaction indole-3-pyruvate + NADPH + O2 + H(+) = (indol-3-yl)acetate + CO2 + NADP(+) + H2O. It functions in the pathway plant hormone metabolism; auxin biosynthesis. Involved in auxin biosynthesis. Belongs to the set of redundant YUCCA genes probably responsible for auxin biosynthesis in roots. This Arabidopsis thaliana (Mouse-ear cress) protein is Probable indole-3-pyruvate monooxygenase YUCCA8 (YUC8).